The following is a 563-amino-acid chain: Beta-catenin-like protein 1 (563 aa).

Position 1 is an N-acetylmethionine (Met-1). The disordered stretch occupies residues 1 to 81 (MDVGELLSYQ…EEEEPLDESS (81 aa)). The Nuclear localization signal motif lies at 16–33 (KRPRDDEEEELKTRRKQT). Positions 34 to 45 (GPRERGRYREDE) are enriched in basic and acidic residues. Positions 66–78 (DGEEEEEEEEPLD) are enriched in acidic residues. HEAT repeat units lie at residues 79–129 (ESSV…VVAT) and 134–176 (YHLL…TLHE). Lys-91 bears the N6-acetyllysine mark. Residues 130–140 (MPDLYHLLVEL) carry the Nuclear export signal (NES) motif. ARM repeat units follow at residues 178 to 228 (EEGA…MAEF), 229 to 273 (RPEM…LQDN), 274 to 323 (DENR…CLML), 325 to 363 (SNRE…AMIG), and 364 to 417 (PEGA…LLRN). A Phosphoserine modification is found at Ser-389. Residues 476 to 540 (DMEDEFYLRR…HIIKEYAENI (65 aa)) adopt a coiled-coil conformation. A Phosphoserine modification is found at Ser-545.

As to quaternary structure, component of the PRP19-CDC5L splicing complex composed of a core complex comprising a homotetramer of PRPF19, CDC5L, PLRG1 and BCAS2, and at least three less stably associated proteins CTNNBL1, CWC15 and HSPA8. Interacts directly with CWC15 and CDC5L in the complex. Interacts with AICDA; the interaction is important for the antibody diversification activity of AICDA. Interacts with PRPF31 (via its NLS). Interacts (via its N-terminal NLS) with KPNA1 and KPNA2.

The protein resides in the nucleus. In terms of biological role, component of the PRP19-CDC5L complex that forms an integral part of the spliceosome and is required for activating pre-mRNA splicing. Participates in AID/AICDA-mediated somatic hypermutation (SHM) and class-switch recombination (CSR), 2 processes resulting in the production of high-affinity, mutated isotype-switched antibodies. The sequence is that of Beta-catenin-like protein 1 (Ctnnbl1) from Rattus norvegicus (Rat).